The primary structure comprises 594 residues: ATP-dependent RNA helicase DBP9 (594 aa).

The short motif at 17–45 (TTFEAFHLDSRLLQAIKNIGFQYPTLIQS) is the Q motif element. The 185-residue stretch at 49 to 233 (PLALQQKRDI…QKFCRSPAIL (185 aa)) folds into the Helicase ATP-binding domain. 62–69 (AATGSGKT) is an ATP binding site. Residues 179 to 182 (DEVD) carry the DEAD box motif. The Helicase C-terminal domain maps to 246 to 476 (KLLQYYVKVS…PYKFDQKQVE (231 aa)). 2 disordered regions span residues 339 to 377 (EDDE…QVKK) and 558 to 594 (TKVK…KNFK). Over residues 345–366 (EGHNTENQEEKSLEGEPENDKK) the composition is skewed to basic and acidic residues. Residues 567–584 (NAKKRHSHKKGRVSKPKN) are compositionally biased toward basic residues. Basic and acidic residues predominate over residues 585–594 (GKVDPLKNFK).

This sequence belongs to the DEAD box helicase family. DDX56/DBP9 subfamily. In terms of assembly, interacts with DBP6.

The protein localises to the nucleus. Its subcellular location is the nucleolus. The enzyme catalyses ATP + H2O = ADP + phosphate + H(+). ATP-binding RNA helicase involved in the biogenesis of 60S ribosomal subunits and is required for the normal formation of 25S and 5.8S rRNAs. In Saccharomyces cerevisiae (strain YJM789) (Baker's yeast), this protein is ATP-dependent RNA helicase DBP9 (DBP9).